Reading from the N-terminus, the 189-residue chain is Ribosome maturation factor RimM (189 aa).

One can recognise a PRC barrel domain in the interval D110 to F189.

It belongs to the RimM family. As to quaternary structure, binds ribosomal protein uS19.

Its subcellular location is the cytoplasm. Its function is as follows. An accessory protein needed during the final step in the assembly of 30S ribosomal subunit, possibly for assembly of the head region. Essential for efficient processing of 16S rRNA. May be needed both before and after RbfA during the maturation of 16S rRNA. It has affinity for free ribosomal 30S subunits but not for 70S ribosomes. The sequence is that of Ribosome maturation factor RimM from Blochmanniella pennsylvanica (strain BPEN).